Consider the following 164-residue polypeptide: Mediator of RNA polymerase II transcription subunit 21 (164 aa).

Residues 49–81 (APLPANQTQQGSTLGSNRQTVSPSTQAEAESNF) are disordered. Polar residues predominate over residues 53–81 (ANQTQQGSTLGSNRQTVSPSTQAEAESNF). A coiled-coil region spans residues 114–146 (ESQLKIIDDLSKELQSVEQEQVKKIQEKDKLLK).

It belongs to the Mediator complex subunit 21 family. Component of the Mediator complex.

The protein localises to the nucleus. Its function is as follows. Component of the Mediator complex, a coactivator involved in the regulated transcription of nearly all RNA polymerase II-dependent genes. Mediator functions as a bridge to convey information from gene-specific regulatory proteins to the basal RNA polymerase II transcription machinery. Mediator is recruited to promoters by direct interactions with regulatory proteins and serves as a scaffold for the assembly of a functional preinitiation complex with RNA polymerase II and the general transcription factors. The protein is Mediator of RNA polymerase II transcription subunit 21 (SRB7) of Scheffersomyces stipitis (strain ATCC 58785 / CBS 6054 / NBRC 10063 / NRRL Y-11545) (Yeast).